Consider the following 286-residue polypeptide: MFKMKSCKLWLRGSFFVIVLVLIYLPLIIVVLVSFNGSSTRGNIVLDFGNVLNPNPDAKSAYLRLGEADFAIPLLNSVIIGLITVIVSIPIAIMTAFALLRSRQWLNKTVFGIANFSLATPDIITGISLVLLFANTWLSFNQQLGFFTIISSHISFSVPYALVLIYPKMQKLNRNLILASQDLGYSPIATFFHITLPYLLPSILSAILVVFATSFDDYVITSLVQGSVKTVASELYSFRKGIKAWAIAFGTILILVSILAVLLVTLHKYLRFKHKEMLRVKQWKNS.

The next 6 helical transmembrane spans lie at 15 to 35, 78 to 98, 113 to 133, 145 to 165, 191 to 211, and 244 to 264; these read FFVI…LVSF, VIIG…TAFA, IANF…VLLF, GFFT…LVLI, FFHI…LVVF, and AWAI…VLLV. Residues 74–264 form the ABC transmembrane type-1 domain; that stretch reads LLNSVIIGLI…LVSILAVLLV (191 aa).

The protein belongs to the binding-protein-dependent transport system permease family. CysTW subfamily.

It localises to the cell membrane. Its function is as follows. Required for the activity of the bacterial transport system of putrescine and spermidine. The protein is Spermidine/putrescine transport system permease protein PotC homolog (potC) of Mycoplasma pneumoniae (strain ATCC 29342 / M129 / Subtype 1) (Mycoplasmoides pneumoniae).